We begin with the raw amino-acid sequence, 407 residues long: Imidazolonepropionase (407 aa).

Positions 72 and 74 each coordinate Fe(3+). Zn(2+) is bound by residues histidine 72 and histidine 74. 4-imidazolone-5-propanoate contacts are provided by arginine 81, tyrosine 144, and histidine 177. Tyrosine 144 contributes to the N-formimidoyl-L-glutamate binding site. Histidine 242 contributes to the Fe(3+) binding site. Histidine 242 is a Zn(2+) binding site. 4-imidazolone-5-propanoate is bound at residue glutamine 245. Aspartate 317 is a binding site for Fe(3+). Aspartate 317 is a Zn(2+) binding site. Positions 319 and 321 each coordinate N-formimidoyl-L-glutamate. A 4-imidazolone-5-propanoate-binding site is contributed by threonine 322.

This sequence belongs to the metallo-dependent hydrolases superfamily. HutI family. Zn(2+) serves as cofactor. Fe(3+) is required as a cofactor.

Its subcellular location is the cytoplasm. It carries out the reaction 4-imidazolone-5-propanoate + H2O = N-formimidoyl-L-glutamate. It participates in amino-acid degradation; L-histidine degradation into L-glutamate; N-formimidoyl-L-glutamate from L-histidine: step 3/3. Its function is as follows. Catalyzes the hydrolytic cleavage of the carbon-nitrogen bond in imidazolone-5-propanoate to yield N-formimidoyl-L-glutamate. It is the third step in the universal histidine degradation pathway. This chain is Imidazolonepropionase, found in Rhizobium rhizogenes (Agrobacterium rhizogenes).